The following is a 725-amino-acid chain: Phosphatase and actin regulator 4A (725 aa).

Positions 1–12 (MGQGASTQTLNP) are enriched in polar residues. The interval 1–597 (MGQGASTQTL…SSTWNNKEQW (597 aa)) is disordered. Over residues 55–64 (KPWKWRKKKT) the composition is skewed to basic residues. Basic and acidic residues-rich tracts occupy residues 65 to 100 (SDKF…KDIP), 124 to 147 (GDRK…GERK), and 155 to 164 (KRNDGTERMT). One copy of the RPEL 1 repeat lies at 75-100 (LVLERKMSVRKPREELIERGLLKDIP). Positions 166–177 (MIQSFQKMSLMQ) are enriched in polar residues. The span at 212–221 (VIAAPSSAEP) shows a compositional bias: low complexity. The segment covering 222–235 (APVPPPPIAKPPPR) has biased composition (pro residues). 2 stretches are compositionally biased toward low complexity: residues 265–276 (PAHTTPATVSTH) and 292–313 (PAHV…LLKQ). Positions 359-368 (TPVTKRNSGD) are enriched in polar residues. The segment covering 374 to 384 (PEPPPPAPTSV) has biased composition (pro residues). Positions 385–401 (PIPAAAPISAPPSTQSD) are enriched in low complexity. A compositionally biased stretch (pro residues) spans 402–417 (PPSPTTEPPSQPPPLP). The segment covering 497–510 (QKPELEPRSRRGLV) has biased composition (basic and acidic residues). Acidic residues-rich tracts occupy residues 522-536 (AGSE…ESDS) and 545-554 (DNEEDDDEED). The span at 567-585 (KDTLALKLERQQEKEKSQE) shows a compositional bias: basic and acidic residues. 2 RPEL repeats span residues 606-631 (TALT…LAKN) and 644-669 (RRLT…RFHE).

This sequence belongs to the phosphatase and actin regulator family. Binds ppp1ca and actin.

It is found in the cytoplasm. The protein localises to the cell projection. The protein resides in the lamellipodium. Its function is as follows. Regulator of protein phosphatase 1 (PP1) required for neural tube and optic fissure closure, and enteric neural crest cell (ENCCs) migration during development. Acts as an activator of PP1. During neural tube closure, localizes to the ventral neural tube and activates PP1, leading to down-regulate cell proliferation within cranial neural tissue and the neural retina. Also acts as a regulator of migration of enteric neural crest cells (ENCCs) by activating PP1, leading to repression of the integrin signaling through the rho/rock pathway. The chain is Phosphatase and actin regulator 4A (phactr4a) from Danio rerio (Zebrafish).